The following is a 529-amino-acid chain: MIRGMSNLKESSDFVASSYVRLGGLMDDPAATGGDNPHKVAMLGLTFDDVLLLPAASDVVPATADISSQLTKKIRLKVPLVSSAMDTVTEARMAIAMARAGGMGVLHRNLPVGEQAGQVETVKRSEAGMVTDPVTCRPDNTLAQVGALCARFRISGLPVVDDSGALAGIITNRDMRFEVDQSKQVAEVMTKTPLITAAEGVSADAALGLLRRNKIEKLPVVDGHGRLTGLITVKDFVKTEQHPLATKDNDGRLLVGAAVGVGGDAWVRAMMLVDAGVDVLIVDTAHAHNRLVLDMVGKLKVEIGDRVQVIGGNVATRSAAAALVEAGADAVKVGVGPGSTCTTRVVAGVGAPQITAILEAVAACGPAGVPVIADGGLQYSGDIAKALAAGASTTMLGSLLAGTAEAPGELIFVNGKQFKSYRGMGSLGAMQGRGGDKSYSKDRYFADDALSEDKLVPEGIEGRVPFRGPLSSVIHQLVGGLRAAMGYTGSPTIEVLQQAQFVRITPAGLKESHPHDVAMTVEAPNYYPR.

2 CBS domains span residues methionine 129 to valine 185 and methionine 189 to threonine 246. NAD(+) contacts are provided by residues aspartate 283 and glycine 334 to glycine 336. Glycine 336 and glycine 338 together coordinate K(+). Residue serine 339 coordinates IMP. Cysteine 341 serves as a coordination point for K(+). Cysteine 341 serves as the catalytic Thioimidate intermediate. IMP contacts are provided by residues aspartate 374–glycine 376, glycine 397–serine 398, and tyrosine 421–glycine 425. Arginine 443 serves as the catalytic Proton acceptor. Glutamate 458 is an IMP binding site. 3 residues coordinate K(+): glutamate 511, serine 512, and histidine 513.

This sequence belongs to the IMPDH/GMPR family. As to quaternary structure, homotetramer. It depends on K(+) as a cofactor.

It carries out the reaction IMP + NAD(+) + H2O = XMP + NADH + H(+). It functions in the pathway purine metabolism; XMP biosynthesis via de novo pathway; XMP from IMP: step 1/1. Its activity is regulated as follows. Mycophenolic acid (MPA) is a non-competitive inhibitor that prevents formation of the closed enzyme conformation by binding to the same site as the amobile flap. In contrast, mizoribine monophosphate (MZP) is a competitive inhibitor that induces the closed conformation. MPA is a potent inhibitor of mammalian IMPDHs but a poor inhibitor of the bacterial enzymes. MZP is a more potent inhibitor of bacterial IMPDH. Catalyzes the conversion of inosine 5'-phosphate (IMP) to xanthosine 5'-phosphate (XMP), the first committed and rate-limiting step in the de novo synthesis of guanine nucleotides, and therefore plays an important role in the regulation of cell growth. The sequence is that of Inosine-5'-monophosphate dehydrogenase from Mycobacterium leprae (strain TN).